Consider the following 244-residue polypeptide: 23S rRNA (guanosine-2'-O-)-methyltransferase RlmB (244 aa).

Residues Gly196, Ile216, and Leu225 each contribute to the S-adenosyl-L-methionine site.

The protein belongs to the class IV-like SAM-binding methyltransferase superfamily. RNA methyltransferase TrmH family. RlmB subfamily. In terms of assembly, homodimer.

It localises to the cytoplasm. The catalysed reaction is guanosine(2251) in 23S rRNA + S-adenosyl-L-methionine = 2'-O-methylguanosine(2251) in 23S rRNA + S-adenosyl-L-homocysteine + H(+). Its function is as follows. Specifically methylates the ribose of guanosine 2251 in 23S rRNA. In Photorhabdus laumondii subsp. laumondii (strain DSM 15139 / CIP 105565 / TT01) (Photorhabdus luminescens subsp. laumondii), this protein is 23S rRNA (guanosine-2'-O-)-methyltransferase RlmB.